Consider the following 173-residue polypeptide: uncharacterized protein (173 aa).

Transmembrane regions (helical) follow at residues 9 to 29 (FSIC…LLCV), 32 to 52 (ICSA…TFFH), 100 to 120 (MFLC…SFIV), and 127 to 147 (FLFL…GLYP).

It is found in the membrane. This is an uncharacterized protein from Saccharomyces cerevisiae (strain ATCC 204508 / S288c) (Baker's yeast).